A 379-amino-acid polypeptide reads, in one-letter code: Fimbrium subunit Fim1C (379 aa).

A signal peptide spans 1–17 (MEVKSLLMVMATLTIAG). Cys18 carries the N-palmitoyl cysteine lipid modification. Residue Cys18 is the site of S-diacylglycerol cysteine attachment. A propeptide spanning residues 18 to 45 (CSQNEMTEMNPDTNRTIGLDVYTEVQTR) is cleaved from the precursor.

This sequence belongs to the bacteroidetes fimbrillin superfamily. Mfa-like family. As to quaternary structure, may be part of the fimbrial tip.

It localises to the fimbrium. The protein resides in the cell outer membrane. In terms of biological role, probably a component of the fimbrium tip. Fimbriae are filamentous appendages on the cell surface that mediate cell adhesion and biofilm formation. This is Fimbrium subunit Fim1C (fim1C) from Phocaeicola vulgatus (strain ATCC 8482 / DSM 1447 / JCM 5826 / CCUG 4940 / NBRC 14291 / NCTC 11154) (Bacteroides vulgatus).